The following is a 214-amino-acid chain: Protein-L-isoaspartate O-methyltransferase (214 aa).

The active site involves serine 63.

This sequence belongs to the methyltransferase superfamily. L-isoaspartyl/D-aspartyl protein methyltransferase family.

The protein localises to the cytoplasm. The catalysed reaction is [protein]-L-isoaspartate + S-adenosyl-L-methionine = [protein]-L-isoaspartate alpha-methyl ester + S-adenosyl-L-homocysteine. Functionally, catalyzes the methyl esterification of L-isoaspartyl residues in peptides and proteins that result from spontaneous decomposition of normal L-aspartyl and L-asparaginyl residues. It plays a role in the repair and/or degradation of damaged proteins. The polypeptide is Protein-L-isoaspartate O-methyltransferase (Desulfotalea psychrophila (strain LSv54 / DSM 12343)).